A 381-amino-acid polypeptide reads, in one-letter code: Putative steryl acetyl hydrolase mug81 (381 aa).

Over 1–9 the chain is Cytoplasmic; it reads MISLSLLYR. The chain crosses the membrane as a helical; Signal-anchor for type II membrane protein span at residues 10 to 30; it reads ILTLPIILVGTTILYFTIGTN. Over 31 to 381 the chain is Lumenal; it reads FPHDELRHNL…YTFLRETFEE (351 aa). Positions 125–127 match the Involved in the stabilization of the negatively charged intermediate by the formation of the oxyanion hole motif; that stretch reads HGG. An N-linked (GlcNAc...) asparagine glycan is attached at Asn193. Ser200 is a catalytic residue.

Belongs to the 'GDXG' lipolytic enzyme family.

It localises to the cytoplasm. The protein resides in the endoplasmic reticulum membrane. Required for the deacetylation of acetylated sterols. Has a role in meiosis. This chain is Putative steryl acetyl hydrolase mug81 (mug180), found in Schizosaccharomyces pombe (strain 972 / ATCC 24843) (Fission yeast).